Consider the following 422-residue polypeptide: Protein arginine methyltransferase NDUFAF7, mitochondrial (422 aa).

The transit peptide at 1–28 (MRTLLRLKRLMPEVLWTKRSCSSSSINK) directs the protein to the mitochondrion.

The protein belongs to the NDUFAF7 family.

It localises to the mitochondrion. The catalysed reaction is L-arginyl-[protein] + 2 S-adenosyl-L-methionine = N(omega),N(omega)'-dimethyl-L-arginyl-[protein] + 2 S-adenosyl-L-homocysteine + 2 H(+). Its function is as follows. Arginine methyltransferase involved in the assembly or stability of mitochondrial NADH:ubiquinone oxidoreductase complex (complex I). Acts by mediating symmetric dimethylation of 'Arg-118' of ndufs2 after it assembles into the complex I, stabilizing the early intermediate complex. The sequence is that of Protein arginine methyltransferase NDUFAF7, mitochondrial from Danio rerio (Zebrafish).